The primary structure comprises 760 residues: Anti-sigma-I factor RsgI6 (760 aa).

The Cytoplasmic portion of the chain corresponds to 1–55; it reads MIVGKVLDMDEKTAIIMTDDFAFLNVVRTSEMAVGKKVKVLDSDIIKPKNSLRRY. Residues 2–49 enclose the RsgI N-terminal anti-sigma domain; that stretch reads IVGKVLDMDEKTAIIMTDDFAFLNVVRTSEMAVGKKVKVLDSDIIKPK. Residues 56–76 form a helical membrane-spanning segment; the sequence is LPVAAVAACFVIVLSFVLMFI. Over 77–760 the chain is Extracellular; the sequence is NGNTARKNIY…GTLQTTYRIP (684 aa). Residues 274–352 are disordered; it reads AINTGPAESA…STPKPVSPVQ (79 aa). Positions 291 to 352 are enriched in polar residues; that stretch reads LPATSTPGRT…STPKPVSPVQ (62 aa). The GH10 domain occupies 402–701; it reads DSSNKPIENA…NEAGRRFESL (300 aa). The active-site Proton donor is the glutamate 538. The Nucleophile role is filled by glutamate 635.

It in the C-terminal section; belongs to the glycosyl hydrolase 10 (cellulase F) family. In terms of assembly, interacts (via RsgI N-terminal anti-sigma domain) with SigI6.

It is found in the cell membrane. The enzyme catalyses Endohydrolysis of (1-&gt;4)-beta-D-xylosidic linkages in xylans.. It functions in the pathway glycan degradation; xylan degradation. Its function is as follows. Anti-sigma factor for SigI6. Negatively regulates SigI6 activity through direct interaction. Binding of the polysaccharide substrate to the extracellular C-terminal sensing domain of RsgI6 may induce a conformational change in its N-terminal cytoplasmic region, leading to the release and activation of SigI6. Binds to and hydrolyzes insoluble and soluble xylan substrates. Has low enzymatic activity. In Acetivibrio thermocellus (strain ATCC 27405 / DSM 1237 / JCM 9322 / NBRC 103400 / NCIMB 10682 / NRRL B-4536 / VPI 7372) (Clostridium thermocellum), this protein is Anti-sigma-I factor RsgI6.